A 207-amino-acid chain; its full sequence is 2,3-bisphosphoglycerate-dependent phosphoglycerate mutase (207 aa).

Substrate is bound by residues 9 to 16 (RHGQSDWN), 22 to 23 (TG), Arg61, 88 to 91 (ERDY), Lys99, 115 to 116 (RR), and 159 to 160 (GN). The active-site Tele-phosphohistidine intermediate is the His10. Glu88 functions as the Proton donor/acceptor in the catalytic mechanism.

It belongs to the phosphoglycerate mutase family. BPG-dependent PGAM subfamily. In terms of assembly, homodimer.

The enzyme catalyses (2R)-2-phosphoglycerate = (2R)-3-phosphoglycerate. Its pathway is carbohydrate degradation; glycolysis; pyruvate from D-glyceraldehyde 3-phosphate: step 3/5. In terms of biological role, catalyzes the interconversion of 2-phosphoglycerate and 3-phosphoglycerate. This is 2,3-bisphosphoglycerate-dependent phosphoglycerate mutase from Beijerinckia indica subsp. indica (strain ATCC 9039 / DSM 1715 / NCIMB 8712).